Here is an 84-residue protein sequence, read N- to C-terminus: Magnetosome protein MamR (84 aa).

It belongs to the magnetosome MamR family.

The protein resides in the magnetosome. In terms of biological role, may play a role in controlling magnetite number and size but not in control of magnetite morphology. In Paramagnetospirillum magneticum (strain ATCC 700264 / AMB-1) (Magnetospirillum magneticum), this protein is Magnetosome protein MamR.